The sequence spans 95 residues: Small ribosomal subunit protein bS6 (95 aa).

The protein belongs to the bacterial ribosomal protein bS6 family.

Functionally, binds together with bS18 to 16S ribosomal RNA. This Aster yellows witches'-broom phytoplasma (strain AYWB) protein is Small ribosomal subunit protein bS6.